The chain runs to 236 residues: Geranylgeranylglyceryl phosphate synthase (236 aa).

Sn-glycerol 1-phosphate is bound at residue Lys13. Residues Asp15 and Thr42 each contribute to the Mg(2+) site. Sn-glycerol 1-phosphate-binding positions include 161 to 166 (YVEYSG), Gly191, and 211 to 212 (GD).

Belongs to the GGGP/HepGP synthase family. Group I subfamily. It depends on Mg(2+) as a cofactor.

Its subcellular location is the cytoplasm. The enzyme catalyses sn-glycerol 1-phosphate + (2E,6E,10E)-geranylgeranyl diphosphate = sn-3-O-(geranylgeranyl)glycerol 1-phosphate + diphosphate. The protein operates within membrane lipid metabolism; glycerophospholipid metabolism. Prenyltransferase that catalyzes the transfer of the geranylgeranyl moiety of geranylgeranyl diphosphate (GGPP) to the C3 hydroxyl of sn-glycerol-1-phosphate (G1P). This reaction is the first ether-bond-formation step in the biosynthesis of archaeal membrane lipids. In Halobacterium salinarum (strain ATCC 700922 / JCM 11081 / NRC-1) (Halobacterium halobium), this protein is Geranylgeranylglyceryl phosphate synthase.